A 988-amino-acid polypeptide reads, in one-letter code: Junction-mediating and -regulatory protein (988 aa).

The interval 1-126 (MSFALEETLE…RSTRSLLGDP (126 aa)) is interaction with p300/EP300. Residues 51–178 (AQRQRSGSRE…RPAPREAQVS (128 aa)) are disordered. A phosphoserine mark is found at Ser-115 and Ser-121. The segment covering 160-175 (AAGAAAAAARPAPREA) has biased composition (low complexity). 3 coiled-coil regions span residues 324 to 360 (SELR…ELLD), 489 to 541 (LQMM…YEVQ), and 590 to 621 (ASAY…AKKS). The segment at 478-567 (EKLQYAVSKE…SIKRLISEKR (90 aa)) is interaction with p300/EP300. Position 713 is a phosphoserine (Ser-713). Residues 731–742 (EEKTEEVGEGRV) are compositionally biased toward basic and acidic residues. 2 disordered regions span residues 731–755 (EEKT…PQSL) and 800–865 (INPL…LFDS). The segment covering 746–755 (PSQTTEPQSL) has biased composition (polar residues). Residues 803 to 827 (LPSPLPPTPPPPPPPPPPPPPPPLP) show a composition bias toward pro residues. Basic and acidic residues predominate over residues 832–851 (SGPETLEKDLPRKEGNEKRI). Position 888 is a phosphoserine (Ser-888). The region spanning 921–938 (DSNNILAQIRKGVKLKKV) is the WH2 domain. Residues 967-988 (IKEASPESEDEEEALPCTDWEN) are disordered. Acidic residues predominate over residues 972–988 (PESEDEEEALPCTDWEN). Position 974 is a phosphoserine (Ser-974).

Belongs to the JMY family. In terms of assembly, interacts with p300/EP300, the complex activates p53/TP53 transcriptional activity. Interacts with TTC5; the interaction facilitates the association between JMY and p300/EP300. Interacts with MAP1LC3B; the interaction results in the activation of JYM's nucleation activity in the cytoplasm. Interacts with TTC5/STRAP; the interaction results in the inhibition of JYM's nucleation activity in the cytoplasm due to competition with MAP1LC3B binding. Ubiquitinated by MDM2, leading to its subsequent degradation by the proteasome. In case of DNA damage, the interaction with MDM2 is altered, preventing degradation and allowing interaction with p300/EP300 and its function in p53/TP53 stress response.

It is found in the nucleus. The protein localises to the cytoplasmic vesicle. The protein resides in the cytoplasm. Its subcellular location is the cytoskeleton. It localises to the endomembrane system. It is found in the autophagosome membrane. Its function is as follows. Acts both as a nuclear p53/TP53-cofactor and a cytoplasmic regulator of actin dynamics depending on conditions. In nucleus, acts as a cofactor that increases p53/TP53 response via its interaction with p300/EP300. Increases p53/TP53-dependent transcription and apoptosis, suggesting an important role in p53/TP53 stress response such as DNA damage. In cytoplasm, acts as a nucleation-promoting factor for both branched and unbranched actin filaments. Activates the Arp2/3 complex to induce branched actin filament networks. Also catalyzes actin polymerization in the absence of Arp2/3, creating unbranched filaments. Contributes to cell motility by controlling actin dynamics. May promote the rapid formation of a branched actin network by first nucleating new mother filaments and then activating Arp2/3 to branch off these filaments. Upon nutrient stress, directly recruited by MAP1LC3B to the phagophore membrane surfaces to promote actin assembly during autophagy. The p53/TP53-cofactor and actin activator activities are regulated via its subcellular location. This Homo sapiens (Human) protein is Junction-mediating and -regulatory protein (JMY).